The chain runs to 138 residues: Holo-[acyl-carrier-protein] synthase (138 aa).

Residues Asp8 and Glu56 each coordinate Mg(2+).

The protein belongs to the P-Pant transferase superfamily. AcpS family. The cofactor is Mg(2+).

It localises to the cytoplasm. It carries out the reaction apo-[ACP] + CoA = holo-[ACP] + adenosine 3',5'-bisphosphate + H(+). Functionally, transfers the 4'-phosphopantetheine moiety from coenzyme A to a Ser of acyl-carrier-protein. The chain is Holo-[acyl-carrier-protein] synthase from Clostridium novyi (strain NT).